Consider the following 98-residue polypeptide: HIG1 domain family member 1B (98 aa).

The Cytoplasmic portion of the chain corresponds to 1–28; sequence MSANKGWWVPPEGEDNLSKKFLRKTRES. The HIG1 domain maps to 1–94; sequence MSANKGWWVP…YRDYIKRVSE (94 aa). A helical membrane pass occupies residues 29-46; that stretch reads PLVPIGVAGCLVIAAYRI. Residues 47 to 60 lie on the Extracellular side of the membrane; that stretch reads YRLKARGSTKLSIH. The chain crosses the membrane as a helical span at residues 61-83; sequence LIHTRVAAQACAVGAIMLGAMYT. At 84–98 the chain is on the cytoplasmic side; the sequence is MYRDYIKRVSEDAEK.

It localises to the membrane. This chain is HIG1 domain family member 1B (Higd1b), found in Mus musculus (Mouse).